Consider the following 466-residue polypeptide: Cysteine--tRNA ligase (466 aa).

Residue C29 coordinates Zn(2+). A 'HIGH' region motif is present at residues 31 to 41; the sequence is PTVYNYIHIGN. Residues C209, H234, and E238 each coordinate Zn(2+). Residues 266–270 carry the 'KMSKS' region motif; sequence KMSKS. K269 serves as a coordination point for ATP. At S270 the chain carries Phosphoserine.

This sequence belongs to the class-I aminoacyl-tRNA synthetase family. In terms of assembly, monomer. Zn(2+) is required as a cofactor.

Its subcellular location is the cytoplasm. It catalyses the reaction tRNA(Cys) + L-cysteine + ATP = L-cysteinyl-tRNA(Cys) + AMP + diphosphate. This is Cysteine--tRNA ligase from Bacillus pumilus (strain SAFR-032).